The primary structure comprises 250 residues: 2,3-bisphosphoglycerate-dependent phosphoglycerate mutase (250 aa).

Substrate is bound by residues 10–17, 23–24, Arg-62, 89–92, Lys-100, 116–117, and 185–186; these read RHGESQWN, TG, ERHY, RR, and GN. Residue His-11 is the Tele-phosphohistidine intermediate of the active site. Glu-89 (proton donor/acceptor) is an active-site residue.

Belongs to the phosphoglycerate mutase family. BPG-dependent PGAM subfamily. Homodimer.

It catalyses the reaction (2R)-2-phosphoglycerate = (2R)-3-phosphoglycerate. It functions in the pathway carbohydrate degradation; glycolysis; pyruvate from D-glyceraldehyde 3-phosphate: step 3/5. Functionally, catalyzes the interconversion of 2-phosphoglycerate and 3-phosphoglycerate. This Yersinia pseudotuberculosis serotype IB (strain PB1/+) protein is 2,3-bisphosphoglycerate-dependent phosphoglycerate mutase.